The chain runs to 648 residues: Threonine--tRNA ligase (648 aa).

In terms of domain architecture, TGS spans 1–63 (MAQISLTFPD…HADATIAIHT (63 aa)). The tract at residues 247 to 544 (DHRKLGREMD…LIENSAGKLP (298 aa)) is catalytic. The Zn(2+) site is built by C344, H395, and H521.

It belongs to the class-II aminoacyl-tRNA synthetase family. Homodimer. Requires Zn(2+) as cofactor.

The protein localises to the cytoplasm. The enzyme catalyses tRNA(Thr) + L-threonine + ATP = L-threonyl-tRNA(Thr) + AMP + diphosphate + H(+). Catalyzes the attachment of threonine to tRNA(Thr) in a two-step reaction: L-threonine is first activated by ATP to form Thr-AMP and then transferred to the acceptor end of tRNA(Thr). Also edits incorrectly charged L-seryl-tRNA(Thr). This Roseobacter denitrificans (strain ATCC 33942 / OCh 114) (Erythrobacter sp. (strain OCh 114)) protein is Threonine--tRNA ligase.